We begin with the raw amino-acid sequence, 815 residues long: MVLRSGICGLSPHRIFPSLLVVVALVGLLPVLRSHGLQLSPTASTIRSSEPPRERSIGDVTTAPPEVTPESRPVNHSVTDHGMKPRKAFPVLGIDYTHVRTPFEISLWILLACLMKIGFHVIPTISSIVPESCLLIVVGLLVGGLIKGVGETPPFLQSDVFFLFLLPPIILDAGYFLPLRQFTENLGTILIFAVVGTLWNAFFLGGLMYAVCLVGGEQINNIGLLDNLLFGSIISAVDPVAVLAVFEEIHINELLHILVFGESLLNDAVTVVLYHLFEEFANYEHVGIVDIFLGFLSFFVVALGGVLVGVVYGVIAAFTSRFTSHIRVIEPLFVFLYSYMAYLSAELFHLSGIMALIASGVVMRPYVEANISHKSHTTIKYFLKMWSSVSETLIFIFLGVSTVAGSHHWNWTFVISTLLFCLIARVLGVLGLTWFINKFRIVKLTPKDQFIIAYGGLRGAIAFSLGYLLDKKHFPMCDLFLTAIITVIFFTVFVQGMTIRPLVDLLAVKKKQETKRSINEEIHTQFLDHLLTGIEDICGHYGHHHWKDKLNRFNKKYVKKCLIAGERSKEPQLIAFYHKMEMKQAIELVESGGMGKIPSAVSTVSMQNIHPKSLPSERILPALSKDKEEEIRKILRNNLQKTRQRLRSYNRHTLVADPYEEAWNQMLLRRQKARQLEQKINNYLTVPAHKLDSPTMSRARIGSDPLAYEPKEDLPVITIDPASPQSPESVDLVNEELKGKVLGLSRDPAKVAEEDEDDDGGIMMRSKETSSPGTDDVFTPAPSDSPSSQRIQRCLSDPGPHPEPGEGEPFFPKGQ.

At 1–98 the chain is on the extracellular side; that stretch reads MVLRSGICGL…FPVLGIDYTH (98 aa). An O-linked (GalNAc...) threonine glycan is attached at Thr-42. Positions 42 to 79 are disordered; that stretch reads TASTIRSSEPPRERSIGDVTTAPPEVTPESRPVNHSVT. O-linked (GalNAc...) serine glycosylation occurs at Ser-56. Thr-61, Thr-62, and Thr-68 each carry an O-linked (GalNAc...) threonine glycan. Asn-75 carries N-linked (GlcNAc...) asparagine glycosylation. Residues 99–121 traverse the membrane as a helical segment; it reads VRTPFEISLWILLACLMKIGFHV. The Cytoplasmic portion of the chain corresponds to 122–130; it reads IPTISSIVP. The helical transmembrane segment at 131–148 threads the bilayer; it reads ESCLLIVVGLLVGGLIKG. The Extracellular portion of the chain corresponds to 149–158; sequence VGETPPFLQS. The helical transmembrane segment at 159–176 threads the bilayer; sequence DVFFLFLLPPIILDAGYF. Over 177-186 the chain is Cytoplasmic; sequence LPLRQFTENL. Residues 187–215 form a helical membrane-spanning segment; it reads GTILIFAVVGTLWNAFFLGGLMYAVCLVG. At 216-222 the chain is on the extracellular side; the sequence is GEQINNI. The helical transmembrane segment at 223–249 threads the bilayer; the sequence is GLLDNLLFGSIISAVDPVAVLAVFEEI. The Cytoplasmic segment spans residues 250 to 252; the sequence is HIN. A helical membrane pass occupies residues 253–283; that stretch reads ELLHILVFGESLLNDAVTVVLYHLFEEFANY. At 284–287 the chain is on the extracellular side; it reads EHVG. A helical transmembrane segment spans residues 288–322; that stretch reads IVDIFLGFLSFFVVALGGVLVGVVYGVIAAFTSRF. The Cytoplasmic portion of the chain corresponds to 323–328; it reads TSHIRV. A helical membrane pass occupies residues 329–341; it reads IEPLFVFLYSYMA. The Extracellular segment spans residues 342–350; it reads YLSAELFHL. The helical transmembrane segment at 351 to 371 threads the bilayer; it reads SGIMALIASGVVMRPYVEANI. The Cytoplasmic segment spans residues 372–373; that stretch reads SH. The helical transmembrane segment at 374–404 threads the bilayer; the sequence is KSHTTIKYFLKMWSSVSETLIFIFLGVSTVA. Topologically, residues 405 to 410 are extracellular; it reads GSHHWN. Residues 411 to 438 form a helical membrane-spanning segment; sequence WTFVISTLLFCLIARVLGVLGLTWFINK. Residues 439–444 lie on the Cytoplasmic side of the membrane; sequence FRIVKL. Residues 445–469 traverse the membrane as a helical segment; the sequence is TPKDQFIIAYGGLRGAIAFSLGYLL. Residues 470–475 are Extracellular-facing; it reads DKKHFP. A helical transmembrane segment spans residues 476 to 505; sequence MCDLFLTAIITVIFFTVFVQGMTIRPLVDL. The interaction with TESC stretch occupies residues 503–545; it reads VDLLAVKKKQETKRSINEEIHTQFLDHLLTGIEDICGHYGHHH. At 506–815 the chain is on the cytoplasmic side; sequence LAVKKKQETK…EGEPFFPKGQ (310 aa). Positions 509–516 are PI(4,5)P2-binding region; the sequence is KKKQETKR. The interaction with CHP2 stretch occupies residues 515–545; sequence KRSINEEIHTQFLDHLLTGIEDICGHYGHHH. Residues 540 to 545 form a confers pH-dependent PI(4,5)P2 binding region; that stretch reads HYGHHH. The tract at residues 552 to 560 is PI(4,5)P2-binding region; the sequence is RFNKKYVKK. Phosphoserine occurs at positions 599 and 602. Thr-603 bears the Phosphothreonine mark. Ser-605 and Ser-648 each carry phosphoserine. An interaction with TESC region spans residues 633 to 815; that stretch reads KILRNNLQKT…EGEPFFPKGQ (183 aa). Residues 633–815 form an interaction with CALM1 region; it reads KILRNNLQKT…EGEPFFPKGQ (183 aa). The interval 684-687 is interaction with PPP3CA; it reads LTVP. Ser-693, Ser-697, and Ser-703 each carry phosphoserine. The tract at residues 715–720 is interaction with PPP3CA; it reads PVITID. Residues Ser-723, Ser-726, and Ser-729 each carry the phosphoserine modification. The segment at 744 to 815 is disordered; that stretch reads LSRDPAKVAE…EGEPFFPKGQ (72 aa). The residue at position 779 (Thr-779) is a Phosphothreonine. A compositionally biased stretch (polar residues) spans 782–791; it reads PSDSPSSQRI. Ser-785, Ser-787, and Ser-796 each carry phosphoserine.

This sequence belongs to the monovalent cation:proton antiporter 1 (CPA1) transporter (TC 2.A.36) family. In terms of assembly, homodimer; dimerization is crucial for its function. Oligomer. Interacts with CALM1 in a calcium-dependent manner. Interacts with TESC. Interacts (via the C-terminal domain) with CHP1; the interaction occurs at the plasma membrane in a calcium-dependent manner and facilitates the maturation, cell surface expression, and function of SLC9A3. Interacts with CHP2; the interaction occurs in a calcium-dependent manner. Interacts with EZR; regulates the cytoskeletal interactions of SLC9A1 and promotes stress fiber formation. In terms of processing, O-glycosylated. Ubiquitinated, leading to its degradation by the proteasome. Ubiquitination is reduced by CHP1. Post-translationally, phosphorylation at Thr-779 increases SLC9A1 activity. Specifically dephosphorylated at Thr-779 by PPP3CA that negatively regulates SLC9A1 activity. Phosphorylation at Ser-648 by AKT1 reduces SLC9A1 binding to CALM1. In terms of processing, palmitoylated; may play a major role in SLC9A1 regulation. In terms of tissue distribution, kidney and intestine.

It localises to the cell membrane. It is found in the basolateral cell membrane. It carries out the reaction Na(+)(in) + H(+)(out) = Na(+)(out) + H(+)(in). The enzyme catalyses Li(+)(out) + H(+)(in) = Li(+)(in) + H(+)(out). The catalysed reaction is Li(+)(in) + Na(+)(out) = Li(+)(out) + Na(+)(in). Its activity is regulated as follows. Activated at acidic pHs. Inhibited by amiloride and 5-amino-substituted derivatives. Inhibited by cariporide and eniporide. Phosphatidylinositol 4,5-bisphosphate (PI(4,5)P2) and phosphatidylinositol 3,4,5-trisphosphate (PI(3,4,5)P3) bind and differentially regulate SLC9A1 activity. Functionally, electroneutral Na(+) /H(+) antiporter that extrudes Na(+) in exchange for external protons driven by the inward sodium ion chemical gradient, protecting cells from acidification that occurs from metabolism. Exchanges intracellular H(+) ions for extracellular Na(+) in 1:1 stoichiometry. Plays a key role in maintening intracellular pH neutral and cell volume, and thus is important for cell growth, proliferation, migration and survival. In addition, can transport lithium Li(+) and also functions as a Na(+)/Li(+) antiporter. SLC9A1 also functions in membrane anchoring and organization of scaffolding complexes that coordinate signaling inputs. The polypeptide is Sodium/hydrogen exchanger 1 (Homo sapiens (Human)).